A 327-amino-acid chain; its full sequence is Dipeptide transport ATP-binding protein DppF (327 aa).

The ABC transporter domain occupies 12–261 (LNAIGLKKYY…PQHPYTKALL (250 aa)). ATP is bound at residue 54–61 (GESGCGKS).

Belongs to the ABC transporter superfamily.

The protein localises to the cell inner membrane. The enzyme catalyses a dipeptide(out) + ATP + H2O = a dipeptide(in) + ADP + phosphate + H(+). In terms of biological role, part of the ABC transporter DppBCDF involved in dipeptide transport. Responsible for energy coupling to the transport system. The protein is Dipeptide transport ATP-binding protein DppF (dppF) of Haemophilus influenzae (strain ATCC 51907 / DSM 11121 / KW20 / Rd).